We begin with the raw amino-acid sequence, 208 residues long: Large ribosomal subunit protein uL4 (208 aa).

The interval 46-84 is disordered; sequence QGTHKAKTRAEVRGGGRKPFRQKGTGNARQGSTRSPLMI. The span at 69-80 shows a compositional bias: polar residues; sequence GTGNARQGSTRS.

The protein belongs to the universal ribosomal protein uL4 family. In terms of assembly, part of the 50S ribosomal subunit.

Its function is as follows. One of the primary rRNA binding proteins, this protein initially binds near the 5'-end of the 23S rRNA. It is important during the early stages of 50S assembly. It makes multiple contacts with different domains of the 23S rRNA in the assembled 50S subunit and ribosome. Forms part of the polypeptide exit tunnel. This chain is Large ribosomal subunit protein uL4, found in Chlorobium limicola (strain DSM 245 / NBRC 103803 / 6330).